We begin with the raw amino-acid sequence, 328 residues long: Tetraacyldisaccharide 4'-kinase (328 aa).

55 to 62 (TAGGNGKT) is a binding site for ATP.

Belongs to the LpxK family.

It carries out the reaction a lipid A disaccharide + ATP = a lipid IVA + ADP + H(+). The protein operates within glycolipid biosynthesis; lipid IV(A) biosynthesis; lipid IV(A) from (3R)-3-hydroxytetradecanoyl-[acyl-carrier-protein] and UDP-N-acetyl-alpha-D-glucosamine: step 6/6. Its function is as follows. Transfers the gamma-phosphate of ATP to the 4'-position of a tetraacyldisaccharide 1-phosphate intermediate (termed DS-1-P) to form tetraacyldisaccharide 1,4'-bis-phosphate (lipid IVA). This Escherichia coli O139:H28 (strain E24377A / ETEC) protein is Tetraacyldisaccharide 4'-kinase.